A 197-amino-acid polypeptide reads, in one-letter code: ATP-dependent Clp protease proteolytic subunit (197 aa).

Ser-98 acts as the Nucleophile in catalysis. The active site involves His-123.

The protein belongs to the peptidase S14 family. As to quaternary structure, fourteen ClpP subunits assemble into 2 heptameric rings which stack back to back to give a disk-like structure with a central cavity, resembling the structure of eukaryotic proteasomes.

It is found in the cytoplasm. It catalyses the reaction Hydrolysis of proteins to small peptides in the presence of ATP and magnesium. alpha-casein is the usual test substrate. In the absence of ATP, only oligopeptides shorter than five residues are hydrolyzed (such as succinyl-Leu-Tyr-|-NHMec, and Leu-Tyr-Leu-|-Tyr-Trp, in which cleavage of the -Tyr-|-Leu- and -Tyr-|-Trp bonds also occurs).. Functionally, cleaves peptides in various proteins in a process that requires ATP hydrolysis. Has a chymotrypsin-like activity. Plays a major role in the degradation of misfolded proteins. This Ligilactobacillus salivarius (strain UCC118) (Lactobacillus salivarius) protein is ATP-dependent Clp protease proteolytic subunit.